The chain runs to 81 residues: ATP synthase subunit c, chloroplastic (81 aa).

Helical transmembrane passes span 3-23 and 57-77; these read PLIA…ASIG and LAFM…LLFA.

It belongs to the ATPase C chain family. F-type ATPases have 2 components, F(1) - the catalytic core - and F(0) - the membrane proton channel. F(1) has five subunits: alpha(3), beta(3), gamma(1), delta(1), epsilon(1). F(0) has four main subunits: a(1), b(1), b'(1) and c(10-14). The alpha and beta chains form an alternating ring which encloses part of the gamma chain. F(1) is attached to F(0) by a central stalk formed by the gamma and epsilon chains, while a peripheral stalk is formed by the delta, b and b' chains.

The protein resides in the plastid. The protein localises to the chloroplast thylakoid membrane. Its function is as follows. F(1)F(0) ATP synthase produces ATP from ADP in the presence of a proton or sodium gradient. F-type ATPases consist of two structural domains, F(1) containing the extramembraneous catalytic core and F(0) containing the membrane proton channel, linked together by a central stalk and a peripheral stalk. During catalysis, ATP synthesis in the catalytic domain of F(1) is coupled via a rotary mechanism of the central stalk subunits to proton translocation. In terms of biological role, key component of the F(0) channel; it plays a direct role in translocation across the membrane. A homomeric c-ring of between 10-14 subunits forms the central stalk rotor element with the F(1) delta and epsilon subunits. This is ATP synthase subunit c, chloroplastic from Agrostis stolonifera (Creeping bentgrass).